A 453-amino-acid polypeptide reads, in one-letter code: Bifunctional protein GlmU (453 aa).

The tract at residues 1–226 (MKFSAVILAA…PIEVEGVNDR (226 aa)) is pyrophosphorylase. Residues 8–11 (LAAG), Lys22, Gln73, 78–79 (GT), 100–102 (YGD), Gly137, Glu151, Asn166, and Asn224 contribute to the UDP-N-acetyl-alpha-D-glucosamine site. Asp102 is a binding site for Mg(2+). Asn224 contributes to the Mg(2+) binding site. The interval 227-247 (AQLARLERAFQAAQAKKLLEQ) is linker. Residues 248–453 (GVMLRDPARF…TGWQRPVKKK (206 aa)) form an N-acetyltransferase region. The UDP-N-acetyl-alpha-D-glucosamine site is built by Arg330 and Lys348. The active-site Proton acceptor is the His360. Residues Tyr363 and Asn374 each contribute to the UDP-N-acetyl-alpha-D-glucosamine site. Acetyl-CoA contacts are provided by residues Ala377, 383-384 (NY), Ser402, Ala420, and Arg437.

In the N-terminal section; belongs to the N-acetylglucosamine-1-phosphate uridyltransferase family. It in the C-terminal section; belongs to the transferase hexapeptide repeat family. As to quaternary structure, homotrimer. Mg(2+) serves as cofactor.

Its subcellular location is the cytoplasm. It carries out the reaction alpha-D-glucosamine 1-phosphate + acetyl-CoA = N-acetyl-alpha-D-glucosamine 1-phosphate + CoA + H(+). The catalysed reaction is N-acetyl-alpha-D-glucosamine 1-phosphate + UTP + H(+) = UDP-N-acetyl-alpha-D-glucosamine + diphosphate. It participates in nucleotide-sugar biosynthesis; UDP-N-acetyl-alpha-D-glucosamine biosynthesis; N-acetyl-alpha-D-glucosamine 1-phosphate from alpha-D-glucosamine 6-phosphate (route II): step 2/2. Its pathway is nucleotide-sugar biosynthesis; UDP-N-acetyl-alpha-D-glucosamine biosynthesis; UDP-N-acetyl-alpha-D-glucosamine from N-acetyl-alpha-D-glucosamine 1-phosphate: step 1/1. The protein operates within bacterial outer membrane biogenesis; LPS lipid A biosynthesis. Catalyzes the last two sequential reactions in the de novo biosynthetic pathway for UDP-N-acetylglucosamine (UDP-GlcNAc). The C-terminal domain catalyzes the transfer of acetyl group from acetyl coenzyme A to glucosamine-1-phosphate (GlcN-1-P) to produce N-acetylglucosamine-1-phosphate (GlcNAc-1-P), which is converted into UDP-GlcNAc by the transfer of uridine 5-monophosphate (from uridine 5-triphosphate), a reaction catalyzed by the N-terminal domain. The sequence is that of Bifunctional protein GlmU from Vibrio vulnificus (strain YJ016).